The chain runs to 179 residues: Ribosome maturation factor RimM (179 aa).

The region spanning 102 to 175 (VEMWWDRDLV…RIVVDPPPGL (74 aa)) is the PRC barrel domain.

Belongs to the RimM family. In terms of assembly, binds ribosomal protein uS19.

The protein localises to the cytoplasm. Functionally, an accessory protein needed during the final step in the assembly of 30S ribosomal subunit, possibly for assembly of the head region. Essential for efficient processing of 16S rRNA. May be needed both before and after RbfA during the maturation of 16S rRNA. It has affinity for free ribosomal 30S subunits but not for 70S ribosomes. This chain is Ribosome maturation factor RimM, found in Frankia casuarinae (strain DSM 45818 / CECT 9043 / HFP020203 / CcI3).